A 122-amino-acid polypeptide reads, in one-letter code: MKKYNKSIGFYGEDLSVSFLEKEGYSILEKNFNCSSGEIDIIAIKDEIISFIEVKSRFSNSFGNPKESVTCSKQRRIINAAKYYLHIKKLYNYYIRFDVIEINFHIDSSKYELNFLKDAFRV.

Belongs to the UPF0102 family.

This chain is UPF0102 protein CPE1705, found in Clostridium perfringens (strain 13 / Type A).